The sequence spans 494 residues: Alpha-amylase-related protein (494 aa).

The signal sequence occupies residues 1–20; sequence MIKFALALTLCLAGASLSLA. Position 21 is a pyrrolidone carboxylic acid (glutamine 21). Cysteine 48 and cysteine 104 are joined by a disulfide. Ca(2+) is bound by residues asparagine 118, glutamine 169, and aspartate 178. Residues cysteine 157 and cysteine 171 are joined by a disulfide bond. Arginine 206 is a chloride binding site. Aspartate 208 functions as the Nucleophile in the catalytic mechanism. Residue histidine 212 participates in Ca(2+) binding. The active-site Proton donor is glutamate 245. Asparagine 308 and arginine 343 together coordinate chloride. 3 cysteine pairs are disulfide-bonded: cysteine 376-cysteine 382, cysteine 418-cysteine 441, and cysteine 448-cysteine 460.

It belongs to the glycosyl hydrolase 13 family. Monomer. Ca(2+) serves as cofactor. Chloride is required as a cofactor.

The protein resides in the secreted. The enzyme catalyses Endohydrolysis of (1-&gt;4)-alpha-D-glucosidic linkages in polysaccharides containing three or more (1-&gt;4)-alpha-linked D-glucose units.. This is Alpha-amylase-related protein (Amyrel) from Drosophila bakoue (Fruit fly).